The primary structure comprises 155 residues: RNA pyrophosphohydrolase (155 aa).

Residues 5–149 (EYRSGVGIML…KKPLYEKILS (145 aa)) enclose the Nudix hydrolase domain. A Nudix box motif is present at residues 39–60 (GGLEAKETPEVGVLRELEEETG).

The protein belongs to the Nudix hydrolase family. RppH subfamily. A divalent metal cation is required as a cofactor.

In terms of biological role, accelerates the degradation of transcripts by removing pyrophosphate from the 5'-end of triphosphorylated RNA, leading to a more labile monophosphorylated state that can stimulate subsequent ribonuclease cleavage. The polypeptide is RNA pyrophosphohydrolase (Zymomonas mobilis subsp. mobilis (strain ATCC 31821 / ZM4 / CP4)).